The primary structure comprises 446 residues: Hercynine oxygenase (446 aa).

His51 contacts Fe cation. A gamma-L-glutamyl-L-cysteine-binding site is contributed by 87–90; the sequence is RASR. Fe cation is bound by residues His134 and His138. Residues Asp416 and Arg420 each coordinate gamma-L-glutamyl-L-cysteine.

Belongs to the EgtB family. As to quaternary structure, monomer. The cofactor is Fe(2+).

The catalysed reaction is gamma-L-glutamyl-L-cysteine + hercynine + O2 = gamma-L-glutamyl-hercynylcysteine S-oxide + H2O. It participates in amino-acid biosynthesis; ergothioneine biosynthesis. In terms of biological role, catalyzes the oxidative sulfurization of hercynine (N-alpha,N-alpha,N-alpha-trimethyl-L-histidine) into hercynyl-gamma-L-glutamyl-L-cysteine sulfoxide, a step in the biosynthesis pathway of ergothioneine. This Mycolicibacterium thermoresistibile (strain ATCC 19527 / DSM 44167 / CIP 105390 / JCM 6362 / NCTC 10409 / 316) (Mycobacterium thermoresistibile) protein is Hercynine oxygenase.